The chain runs to 420 residues: Vasopressin V1a receptor (420 aa).

The tract at residues M1–V45 is disordered. Residues M1–E54 lie on the Extracellular side of the membrane. A glycan (N-linked (GlcNAc...) asparagine) is linked at N27. Basic and acidic residues predominate over residues A32–V45. Residues I55–A75 traverse the membrane as a helical segment. Over L76–H92 the chain is Cytoplasmic. A helical transmembrane segment spans residues L93 to I113. Over T114–R125 the chain is Extracellular. C124 and C205 are joined by a disulfide. A helical membrane pass occupies residues V126–T146. Topologically, residues A147–R168 are cytoplasmic. A helical transmembrane segment spans residues L169–F189. Topologically, residues S190 to G225 are extracellular. N-linked (GlcNAc...) asparagine glycosylation occurs at N198. Residues V226–W246 traverse the membrane as a helical segment. At R247 to M294 the chain is on the cytoplasmic side. Residues T295–W315 form a helical membrane-spanning segment. The Extracellular portion of the chain corresponds to S316–S331. The helical transmembrane segment at I332–F352 threads the bilayer. The Cytoplasmic portion of the chain corresponds to F353–T420. Residues C367 and C368 are each lipidated (S-palmitoyl cysteine). Residues D379–R411 form a disordered region. Polar residues predominate over residues R385–W403. S406 is subject to Phosphoserine.

It belongs to the G-protein coupled receptor 1 family. Vasopressin/oxytocin receptor subfamily.

It is found in the cell membrane. Functionally, receptor for arginine vasopressin. The activity of this receptor is mediated by G proteins which activate a phosphatidyl-inositol-calcium second messenger system. Involved in social memory formation. The sequence is that of Vasopressin V1a receptor (Avpr1a) from Microtus montanus (Montane vole).